The primary structure comprises 319 residues: Glycine--tRNA ligase alpha subunit (319 aa).

The protein belongs to the class-II aminoacyl-tRNA synthetase family. In terms of assembly, tetramer of two alpha and two beta subunits.

It localises to the cytoplasm. It carries out the reaction tRNA(Gly) + glycine + ATP = glycyl-tRNA(Gly) + AMP + diphosphate. The sequence is that of Glycine--tRNA ligase alpha subunit from Coxiella burnetii (strain CbuK_Q154) (Coxiella burnetii (strain Q154)).